A 1694-amino-acid chain; its full sequence is Protein TOPAZ1 (1694 aa).

4 disordered regions span residues 1–135 (MRRP…PGLD), 322–341 (EESS…EKAD), 600–629 (ELSR…TGNK), and 891–920 (ISQE…EPSD). Positions 31-40 (GAAGGCGPEA) are enriched in gly residues. Residues 95-116 (SDPRGLEAAKEAELPLQTERHT) are compositionally biased toward basic and acidic residues. A compositionally biased stretch (polar residues) spans 603–627 (RSGSEVISNTTEDTQLTSETQSLTG). The segment covering 903–920 (QSTDSKYMETPVKKEPSD) has biased composition (basic and acidic residues).

The protein resides in the cytoplasm. The protein localises to the cytosol. Its function is as follows. Important for normal spermatogenesis and male fertility. Specifically required for progression to the post-meiotic stages of spermatocyte development. Seems to be necessary for normal expression levels of a number of testis-expressed gene transcripts, although its role in this process is unclear. The protein is Protein TOPAZ1 (TOPAZ1) of Gorilla gorilla gorilla (Western lowland gorilla).